The sequence spans 209 residues: Urease accessory protein UreG (209 aa).

18 to 25 contributes to the GTP binding site; sequence GPVGSGKT.

Belongs to the SIMIBI class G3E GTPase family. UreG subfamily. As to quaternary structure, homodimer. UreD, UreF and UreG form a complex that acts as a GTP-hydrolysis-dependent molecular chaperone, activating the urease apoprotein by helping to assemble the nickel containing metallocenter of UreC. The UreE protein probably delivers the nickel.

The protein localises to the cytoplasm. Facilitates the functional incorporation of the urease nickel metallocenter. This process requires GTP hydrolysis, probably effectuated by UreG. The polypeptide is Urease accessory protein UreG (Cupriavidus necator (strain ATCC 17699 / DSM 428 / KCTC 22496 / NCIMB 10442 / H16 / Stanier 337) (Ralstonia eutropha)).